The primary structure comprises 126 residues: Aspartate 1-decarboxylase (126 aa).

Residue S25 is the Schiff-base intermediate with substrate; via pyruvic acid of the active site. S25 is subject to Pyruvic acid (Ser). T57 contacts substrate. The active-site Proton donor is Y58. A substrate-binding site is contributed by 73 to 75 (GAA).

It belongs to the PanD family. As to quaternary structure, heterooctamer of four alpha and four beta subunits. Pyruvate is required as a cofactor. In terms of processing, is synthesized initially as an inactive proenzyme, which is activated by self-cleavage at a specific serine bond to produce a beta-subunit with a hydroxyl group at its C-terminus and an alpha-subunit with a pyruvoyl group at its N-terminus.

The protein resides in the cytoplasm. The enzyme catalyses L-aspartate + H(+) = beta-alanine + CO2. The protein operates within cofactor biosynthesis; (R)-pantothenate biosynthesis; beta-alanine from L-aspartate: step 1/1. Catalyzes the pyruvoyl-dependent decarboxylation of aspartate to produce beta-alanine. The polypeptide is Aspartate 1-decarboxylase (Cellvibrio japonicus (strain Ueda107) (Pseudomonas fluorescens subsp. cellulosa)).